A 63-amino-acid chain; its full sequence is Small ribosomal subunit protein eS31 (63 aa).

4 residues coordinate Zn(2+): cysteine 34, cysteine 37, cysteine 53, and cysteine 56. Residues 34 to 56 form a C4-type zinc finger; it reads CPKCGSVMAFHREPVPRWHCGKC.

It belongs to the eukaryotic ribosomal protein eS31 family. In terms of assembly, part of the 30S ribosomal subunit. Zn(2+) serves as cofactor.

The chain is Small ribosomal subunit protein eS31 from Pyrobaculum neutrophilum (strain DSM 2338 / JCM 9278 / NBRC 100436 / V24Sta) (Thermoproteus neutrophilus).